Reading from the N-terminus, the 132-residue chain is Glycine cleavage system H protein (132 aa).

One can recognise a Lipoyl-binding domain in the interval 27-109 (FATIGISAFA…FDFGWILKVK (83 aa)). Lys68 is modified (N6-lipoyllysine).

The protein belongs to the GcvH family. As to quaternary structure, the glycine cleavage system is composed of four proteins: P, T, L and H. Requires (R)-lipoate as cofactor.

Functionally, the glycine cleavage system catalyzes the degradation of glycine. The H protein shuttles the methylamine group of glycine from the P protein to the T protein. This chain is Glycine cleavage system H protein, found in Rhodopirellula baltica (strain DSM 10527 / NCIMB 13988 / SH1).